We begin with the raw amino-acid sequence, 180 residues long: UPF0227 protein YcfP (180 aa).

Belongs to the UPF0227 family.

The sequence is that of UPF0227 protein YcfP from Escherichia coli O7:K1 (strain IAI39 / ExPEC).